Reading from the N-terminus, the 930-residue chain is Isoleucine--tRNA ligase (930 aa).

A 'HIGH' region motif is present at residues 57–67; that stretch reads PYANGNIHVGH. Glu554 provides a ligand contact to L-isoleucyl-5'-AMP. A 'KMSKS' region motif is present at residues 595–599; that stretch reads KMSKS. ATP is bound at residue Lys598. Cys888, Cys891, Cys908, and Cys911 together coordinate Zn(2+).

Belongs to the class-I aminoacyl-tRNA synthetase family. IleS type 1 subfamily. Monomer. It depends on Zn(2+) as a cofactor.

Its subcellular location is the cytoplasm. It catalyses the reaction tRNA(Ile) + L-isoleucine + ATP = L-isoleucyl-tRNA(Ile) + AMP + diphosphate. Functionally, catalyzes the attachment of isoleucine to tRNA(Ile). As IleRS can inadvertently accommodate and process structurally similar amino acids such as valine, to avoid such errors it has two additional distinct tRNA(Ile)-dependent editing activities. One activity is designated as 'pretransfer' editing and involves the hydrolysis of activated Val-AMP. The other activity is designated 'posttransfer' editing and involves deacylation of mischarged Val-tRNA(Ile). The sequence is that of Isoleucine--tRNA ligase from Streptococcus pneumoniae (strain P1031).